The sequence spans 301 residues: Small ribosomal subunit protein uS2 (301 aa).

The interval 237 to 301 (PTESWNDTVV…QDWSNSTSQW (65 aa)) is disordered. Positions 264–278 (PQYAPAPQAAAAPVA) are enriched in low complexity.

Belongs to the universal ribosomal protein uS2 family. In terms of assembly, component of the small ribosomal subunit. Mature ribosomes consist of a small (40S) and a large (60S) subunit. The 40S subunit contains about 33 different proteins and 1 molecule of RNA (18S). The 60S subunit contains about 49 different proteins and 3 molecules of RNA (28S, 5.8S and 5S). Interacts with ribosomal protein S21.

It localises to the cytoplasm. Its function is as follows. Required for the assembly and/or stability of the 40S ribosomal subunit. Required for the processing of the 20S rRNA-precursor to mature 18S rRNA in a late step of the maturation of 40S ribosomal subunits. This Diaphorina citri (Asian citrus psyllid) protein is Small ribosomal subunit protein uS2.